Consider the following 129-residue polypeptide: Small ribosomal subunit protein uS11 (129 aa).

It belongs to the universal ribosomal protein uS11 family. Part of the 30S ribosomal subunit. Interacts with proteins S7 and S18. Binds to IF-3.

Functionally, located on the platform of the 30S subunit, it bridges several disparate RNA helices of the 16S rRNA. Forms part of the Shine-Dalgarno cleft in the 70S ribosome. This is Small ribosomal subunit protein uS11 from Francisella tularensis subsp. tularensis (strain FSC 198).